Reading from the N-terminus, the 240-residue chain is Homeobox-leucine zipper protein HOX14 (240 aa).

Residues 26 to 64 (SGEVQGERPRARRRRRRGARCVGGGGGGGEVDGGDPKKR) form a disordered region. The span at 35–44 (RARRRRRRGA) shows a compositional bias: basic residues. The segment covering 46 to 56 (CVGGGGGGGEV) has biased composition (gly residues). The homeobox DNA-binding region spans 59–118 (GDPKKRRLSDEQVEMLELSFREERKLETGRKVHLASELGLDPKQVAVWFQNRRARHKSKL). A coiled-coil region spans residues 108 to 167 (QNRRARHKSKLLEEEFSKLKHAHDAAILHKCHLENEVLRLKERLVVAEEEVRRLRSAAGS).

It belongs to the HD-ZIP homeobox family. Class I subfamily. Expressed in roots, stems, leaf blades and panicles.

Its subcellular location is the nucleus. In terms of biological role, probable transcription factor. The polypeptide is Homeobox-leucine zipper protein HOX14 (HOX14) (Oryza sativa subsp. japonica (Rice)).